A 371-amino-acid chain; its full sequence is Palmitoyl-monogalactosyldiacylglycerol delta-7 desaturase, chloroplastic (371 aa).

The transit peptide at 1–67 directs the protein to the chloroplast; it reads MASLLTKPKP…KGLKRDVTTA (67 aa). Transmembrane regions (helical) follow at residues 103–123 and 127–147; these read FGAV…PFQF and AVSV…TLSF. Residues 148-153 carry the Histidine box-1 motif; sequence HRNLSH. The Histidine box-2 signature appears at 185–189; it reads HRYHH. The chain crosses the membrane as a helical span at residues 251–271; that stretch reads ALAVALYAMGGFPFIVWGMGV. Positions 317–321 match the Histidine box-3 motif; that stretch reads HNNHH.

The protein belongs to the fatty acid desaturase type 1 family. Fe(2+) is required as a cofactor. In terms of tissue distribution, highly expressed in young leaves. Low expression in roots.

The protein resides in the plastid. Its subcellular location is the chloroplast membrane. It catalyses the reaction a 1-acyl-2-hexadecanoyl-glycerolipid + 2 reduced [2Fe-2S]-[ferredoxin] + O2 + 2 H(+) = a 1-acyl-2-[(7Z)-hexadecenoyl]-glycerolipid + 2 oxidized [2Fe-2S]-[ferredoxin] + 2 H2O. The protein operates within lipid metabolism; oxylipin biosynthesis. It participates in lipid metabolism; polyunsaturated fatty acid biosynthesis. In terms of biological role, fatty acid desaturase involved in the first desaturation step leading to the formation of hexadeca 7,10,13-trienoic acid (16:3(7Z,10Z,13Z)), the major functional components of thylakoid membranes. Required for chloroplast biogenesis at low temperature. Also indirectly involved in the production of the oxylipin dinor-oxo-phyto-dienoic acid implicated in wound signaling. The protein is Palmitoyl-monogalactosyldiacylglycerol delta-7 desaturase, chloroplastic of Arabidopsis thaliana (Mouse-ear cress).